The sequence spans 434 residues: Adenylosuccinate synthetase (434 aa).

Residues 11-17 and 39-41 each bind GTP; these read GDEGKGK and GHT. D12 serves as the catalytic Proton acceptor. Residues D12 and G39 each coordinate Mg(2+). IMP-binding positions include 12-15, 37-40, T134, R148, N230, T245, and R309; these read DEGK and NAGH. H40 (proton donor) is an active-site residue. 305–311 contributes to the substrate binding site; sequence VTTGRKR. Residues R311, 337–339, and 419–421 contribute to the GTP site; these read KLD and GTG.

It belongs to the adenylosuccinate synthetase family. Homodimer. The cofactor is Mg(2+).

It is found in the cytoplasm. The enzyme catalyses IMP + L-aspartate + GTP = N(6)-(1,2-dicarboxyethyl)-AMP + GDP + phosphate + 2 H(+). It functions in the pathway purine metabolism; AMP biosynthesis via de novo pathway; AMP from IMP: step 1/2. Its function is as follows. Plays an important role in the de novo pathway and in the salvage pathway of purine nucleotide biosynthesis. Catalyzes the first committed step in the biosynthesis of AMP from IMP. This is Adenylosuccinate synthetase from Lachancea thermotolerans (strain ATCC 56472 / CBS 6340 / NRRL Y-8284) (Yeast).